The sequence spans 25 residues: U1-poneritoxin-Ng1b (25 aa).

Expressed by the venom gland.

Its subcellular location is the secreted. It localises to the target cell membrane. Functionally, has a broad spectrum of activity against both Gram-positive and Gram-negative bacteria and S.cerevisiae. Has insecticidal and hemolytic activities. May act by disrupting the integrity of the bacterial cell membrane. This Neoponera goeldii (Ponerine ant) protein is U1-poneritoxin-Ng1b.